The chain runs to 483 residues: Rhamnulokinase (483 aa).

Position 11 to 15 (Ala-11 to Arg-15) interacts with ATP. Residues Gly-79 and His-234–Thr-236 each bind substrate. Residue Asp-235 is the Proton acceptor of the active site. Thr-257 provides a ligand contact to ATP. Residue Asn-294 coordinates substrate. An ATP-binding site is contributed by Gln-302. Cys-352 and Cys-369 form a disulfide bridge. Gly-401 contacts ATP.

Belongs to the rhamnulokinase family. Mg(2+) serves as cofactor.

The enzyme catalyses L-rhamnulose + ATP = L-rhamnulose 1-phosphate + ADP + H(+). The protein operates within carbohydrate degradation; L-rhamnose degradation; glycerone phosphate from L-rhamnose: step 2/3. Functionally, involved in the catabolism of L-rhamnose (6-deoxy-L-mannose). Catalyzes the transfer of the gamma-phosphate group from ATP to the 1-hydroxyl group of L-rhamnulose to yield L-rhamnulose 1-phosphate. In Listeria innocua serovar 6a (strain ATCC BAA-680 / CLIP 11262), this protein is Rhamnulokinase.